Here is a 368-residue protein sequence, read N- to C-terminus: Cystathionine beta-lyase (368 aa).

The residue at position 221 (K221) is an N6-(pyridoxal phosphate)lysine.

This sequence belongs to the class-II pyridoxal-phosphate-dependent aminotransferase family. MalY/PatB cystathionine beta-lyase subfamily. The cofactor is pyridoxal 5'-phosphate.

It catalyses the reaction L,L-cystathionine + H2O = L-homocysteine + pyruvate + NH4(+). The enzyme catalyses an S-substituted L-cysteine + H2O = a thiol + pyruvate + NH4(+). It participates in amino-acid biosynthesis; L-methionine biosynthesis via de novo pathway; L-homocysteine from L-cystathionine: step 1/1. In terms of biological role, catalyzes the transformation of cystathionine to homocysteine. The polypeptide is Cystathionine beta-lyase (metC) (Corynebacterium glutamicum (Brevibacterium saccharolyticum)).